The chain runs to 972 residues: MTDTTKIDYSKTLYLPQTEFPIRAGLPQREPLFVQRWEEMNLYKKLREQAKDRPLYVLHDGPPYANGNIHIGHALNKILKDVITRSFQMRGYNSNYVPGWDCHGLPIEWKIEEKYRAAGKNKDEVPINEFRKECRELASNWIKVQTEEFKRLAILGDFENPYTTMNFHAEARIAGELLKFAASGQLYRGSKPVMWSVVERTALAEAEVEYHDIESDMIWVKFPVAGEVATENDLSGSAVVIWTTTPWTIPGNRAVSYSSRIEYGLFEITEAENDFGPRPGERLVFADKLVEECCAKAKLQFKRLRSVSAEELGKIVLDHPLKGFGGGYEFVVPMLDGDHVTDDAGTGFVHTAPSHGREDFEAWMDNARQLEARGIDPNIPFPVGDDGFYTKDAPGFGPDREGGPARVIDDNGKKGDANKVVIEQLIAADKLFARGRLKHSYPHSWRSKKPVIFRNTPQWFVYMDKNLGDGTTLRSRALKAIDETRFVPAAGQTRLRSMIEGRPDWVLSRQRAWGVPICVFVDEEGNILQDDAVNKRIMDAFEKEGADAWFADGARERFLGARAGEGWTQVRDILDVWFDSGSTHTFTLEDRPDLKWPADVYLEGSDQHRGWFHSSLLESCGTRGRAPYNAVVTHGFTMDEHGKKMSKSLGNTVTPQDVIKESGADILRLWVMTTDYWEDQRLGKSIIQTNIDAYRKLRNTIRWMLGTLAHDEGENVAYADLPELERLMLHRLTELDELVRSGYDTFDFKRIARALVDFMNVELSAFYFDIRKDALYCDAPSSIRRKAALQTVREIFVRLTTWLAPMLPFTMEEAWLDRYPQSVSIHAEQFRPTPAEWRDDVLAEKWRKVRAVRRVVTGALELERADKRIGSSLEAAPVVYIADKSLSDSLEGLDFAEICITSGISVSDAAAPEGAFTLGDVKGVAVVPERAKGEKCARSWRYTTDVGADPEFPEVSARDAAALRELQALGKL.

A 'HIGH' region motif is present at residues 63-73 (PYANGNIHIGH). Glu603 contacts L-isoleucyl-5'-AMP. The 'KMSKS' region signature appears at 644–648 (KMSKS). Lys647 contacts ATP.

It belongs to the class-I aminoacyl-tRNA synthetase family. IleS type 1 subfamily. As to quaternary structure, monomer.

It localises to the cytoplasm. The catalysed reaction is tRNA(Ile) + L-isoleucine + ATP = L-isoleucyl-tRNA(Ile) + AMP + diphosphate. Catalyzes the attachment of isoleucine to tRNA(Ile). As IleRS can inadvertently accommodate and process structurally similar amino acids such as valine, to avoid such errors it has two additional distinct tRNA(Ile)-dependent editing activities. One activity is designated as 'pretransfer' editing and involves the hydrolysis of activated Val-AMP. The other activity is designated 'posttransfer' editing and involves deacylation of mischarged Val-tRNA(Ile). This chain is Isoleucine--tRNA ligase, found in Brucella suis biovar 1 (strain 1330).